The chain runs to 268 residues: Small ribosomal subunit protein uS2 (268 aa).

Positions 228-268 are disordered; sequence QLDSEQDYEDFDESISDEYDDYEDEEEYEEQDLEVDASEDE. Positions 231-268 are enriched in acidic residues; that stretch reads SEQDYEDFDESISDEYDDYEDEEEYEEQDLEVDASEDE.

It belongs to the universal ribosomal protein uS2 family.

The sequence is that of Small ribosomal subunit protein uS2 from Rippkaea orientalis (strain PCC 8801 / RF-1) (Cyanothece sp. (strain PCC 8801)).